The sequence spans 375 residues: Probable neutral protease 2 homolog ARB_05817 (375 aa).

The first 19 residues, 1–19, serve as a signal peptide directing secretion; the sequence is MQVIVALAALGSLAAPALG. A propeptide spanning residues 20-189 is cleaved from the precursor; the sequence is FSIPRGVPVS…RGPLTRINKR (170 aa). 2 disulfides stabilise this stretch: Cys197/Cys267 and Cys274/Cys292. A Zn(2+)-binding site is contributed by His317. The active site involves Glu318. Positions 321 and 332 each coordinate Zn(2+).

This sequence belongs to the peptidase M35 family. Requires Zn(2+) as cofactor.

It localises to the secreted. It catalyses the reaction Preferential cleavage of bonds with hydrophobic residues in P1'. Also 3-Asn-|-Gln-4 and 8-Gly-|-Ser-9 bonds in insulin B chain.. Functionally, probable secreted metalloprotease that shows high activities on basic nuclear substrates such as histone and protamine. May be involved in virulence. This is Probable neutral protease 2 homolog ARB_05817 from Arthroderma benhamiae (strain ATCC MYA-4681 / CBS 112371) (Trichophyton mentagrophytes).